The following is a 406-amino-acid chain: MTFPVEKVRADFPILQREVNGLPLAYLDSAASAQKPNQVIDAESAFYRHGYAAVHRGIHTLSAQATESMENVRKQASRFINARSAEELVFVRGTTEGINLVANSWGTENIRAGDNIIISEMEHHANIVPWQMLCERKGAELRVIPLHPDGTLRLETLAALFDDRTRLLAITHVSNVLGTENPLPDMIALARQHGAKVLVDGAQAVMHHVVDVQALDCDFYVFSGHKLYGPTGIGILYVKEALLQEMPPWEGGGSMISTVSLTQGTTWAKAPWRFEAGTPNTGGIIGLGAAIDYVTSLGLDKIGDYEQMLMRYALEQLAQVPDITLYGPAQRLGVIAFNLGKHHAYDVGSFLDNYGIAVRTGHHCAMPLMAWYGVPAMCRASLAMYNTHEEVDRLVAGLTRIHRLLG.

Residue Lys226 is modified to N6-(pyridoxal phosphate)lysine. Residue Cys364 is the Cysteine persulfide intermediate of the active site.

This sequence belongs to the class-V pyridoxal-phosphate-dependent aminotransferase family. Csd subfamily. Homodimer. Interacts with SufE and the SufBCD complex composed of SufB, SufC and SufD. The interaction with SufE is required to mediate the direct transfer of the sulfur atom from the S-sulfanylcysteine. Pyridoxal 5'-phosphate is required as a cofactor.

Its subcellular location is the cytoplasm. The catalysed reaction is (sulfur carrier)-H + L-cysteine = (sulfur carrier)-SH + L-alanine. It catalyses the reaction L-selenocysteine + AH2 = hydrogenselenide + L-alanine + A + H(+). The protein operates within cofactor biosynthesis; iron-sulfur cluster biosynthesis. Cysteine desulfurases mobilize the sulfur from L-cysteine to yield L-alanine, an essential step in sulfur metabolism for biosynthesis of a variety of sulfur-containing biomolecules. Component of the suf operon, which is activated and required under specific conditions such as oxidative stress and iron limitation. Acts as a potent selenocysteine lyase in vitro, that mobilizes selenium from L-selenocysteine. Selenocysteine lyase activity is however unsure in vivo. The sequence is that of Cysteine desulfurase from Salmonella choleraesuis (strain SC-B67).